We begin with the raw amino-acid sequence, 116 residues long: Iron-sulfur cluster insertion protein ErpA (116 aa).

Residues Cys-44, Cys-108, and Cys-110 each coordinate iron-sulfur cluster.

Belongs to the HesB/IscA family. Homodimer. Iron-sulfur cluster is required as a cofactor.

Required for insertion of 4Fe-4S clusters for at least IspG. In Shewanella putrefaciens (strain CN-32 / ATCC BAA-453), this protein is Iron-sulfur cluster insertion protein ErpA.